Consider the following 743-residue polypeptide: Catalase-peroxidase (743 aa).

Positions 1-15 are enriched in polar residues; it reads MSSDSRPPQPDTSTQ. A disordered region spans residues 1–40; the sequence is MSSDSRPPQPDTSTQSNSESESPAISSPTPQDHAPMTNRD. Over residues 16–28 the composition is skewed to low complexity; it reads SNSESESPAISSP. Positions 110–233 form a cross-link, tryptophyl-tyrosyl-methioninium (Trp-Tyr) (with M-259); that stretch reads WHAAGTYRIQ…YGATTMGLIY (124 aa). Catalysis depends on His111, which acts as the Proton acceptor. The tryptophyl-tyrosyl-methioninium (Tyr-Met) (with W-110) cross-link spans 233-259; it reads YVNPEGPEGKPDPVAAAHDIRETFARM. His274 lines the heme b pocket. Residues 490–511 form a disordered region; it reads DKRGGANGGRLRLEPQKSWESN.

This sequence belongs to the peroxidase family. Peroxidase/catalase subfamily. Homodimer or homotetramer. It depends on heme b as a cofactor. Post-translationally, formation of the three residue Trp-Tyr-Met cross-link is important for the catalase, but not the peroxidase activity of the enzyme.

It carries out the reaction H2O2 + AH2 = A + 2 H2O. The catalysed reaction is 2 H2O2 = O2 + 2 H2O. Its function is as follows. Bifunctional enzyme with both catalase and broad-spectrum peroxidase activity. The sequence is that of Catalase-peroxidase from Mycobacterium marinum (strain ATCC BAA-535 / M).